Consider the following 512-residue polypeptide: Ferrochelatase-2, chloroplastic (512 aa).

Residues 1 to 32 are disordered; that stretch reads MNCPAMTASPSSSSSSSYSTFRPPPPLLPQLS. A chloroplast-targeting transit peptide spans 1–83; it reads MNCPAMTASP…SNPLNISSSS (83 aa). The segment covering 9–21 has biased composition (low complexity); it reads SPSSSSSSSYSTF. The residue at position 84 (Val-84) is an N-acetylvaline.

This sequence belongs to the ferrochelatase family. As to expression, expressed in leaves and flowers.

It is found in the plastid. The protein localises to the chloroplast membrane. The protein resides in the chloroplast thylakoid membrane. It catalyses the reaction heme b + 2 H(+) = protoporphyrin IX + Fe(2+). It functions in the pathway porphyrin-containing compound metabolism; protoheme biosynthesis; protoheme from protoporphyrin-IX: step 1/1. Catalyzes the last step of heme biosynthesis by inserting ferrous iron into protoporphyrin IX to produce protoheme. Produces heme for photosynthetic cytochromes, and for proteins involved in abiotic and biotic stress responses. May play a role in the quality control of individual chloroplasts during photo-oxidative stress through regulation of heme biosynthesis. In Arabidopsis thaliana (Mouse-ear cress), this protein is Ferrochelatase-2, chloroplastic.